The primary structure comprises 567 residues: Polyadenylate-binding protein-interacting protein 7 (567 aa).

The segment at 1 to 22 is disordered; it reads MSLTKKASEPKLSGTSIKPTTL. Residues 13–22 are compositionally biased toward polar residues; the sequence is SGTSIKPTTL. A PAM2-like motif is present at residues 21–31; the sequence is TLNPHAAEFVP. One can recognise a CUE domain in the interval 215–259; it reads DMEVNPVDFLASQFPGFAAESLAEVYFANGCDLQLTIEMLTQLEL. Residues 355–387 are disordered; that stretch reads RNDSADSSIGSSRNSGAYKSGRGRSIYSDKLQS. Over residues 359 to 371 the composition is skewed to polar residues; that stretch reads ADSSIGSSRNSGA. A Smr domain is found at 485-567; that stretch reads IDLHGLHVSE…QAGLLRVIIY (83 aa).

As to quaternary structure, interacts with MPC and PAB2. Expressed in cauline leaves, stems, rosette leaves, immature siliques and primary inflorescences.

This chain is Polyadenylate-binding protein-interacting protein 7 (CID7), found in Arabidopsis thaliana (Mouse-ear cress).